The chain runs to 199 residues: Prolactin-1 (199 aa).

3 disulfide bridges follow: C4–C11, C58–C174, and C191–C199. An N-linked (GlcNAc...) asparagine glycan is attached at N60.

It belongs to the somatotropin/prolactin family. In terms of processing, glycosylated.

Its subcellular location is the secreted. In Crocodylus novaeguineae (Crocodile), this protein is Prolactin-1.